A 154-amino-acid polypeptide reads, in one-letter code: Large ribosomal subunit protein uL13 (154 aa).

This sequence belongs to the universal ribosomal protein uL13 family. In terms of assembly, part of the 50S ribosomal subunit.

In terms of biological role, this protein is one of the early assembly proteins of the 50S ribosomal subunit, although it is not seen to bind rRNA by itself. It is important during the early stages of 50S assembly. The chain is Large ribosomal subunit protein uL13 from Allorhizobium ampelinum (strain ATCC BAA-846 / DSM 112012 / S4) (Agrobacterium vitis (strain S4)).